The sequence spans 855 residues: Oxysterol-binding protein-related protein 3 (855 aa).

The tract at residues 1 to 32 (MSDEKNLGVSQKLVSPSRSTSSCSSKQGSRQD) is disordered. S15 and S33 each carry phosphoserine. The segment covering 15–31 (SPSRSTSSCSSKQGSRQ) has biased composition (low complexity). In terms of domain architecture, PH spans 50–145 (PPVQKGFLLK…WVSKLRHHRM (96 aa)). An FFAT 1 motif is present at residues 161–167 (FFSGSSV). Residues S199, S250, S272, S277, S288, S291, S340, S393, S405, and S408 each carry the phosphoserine modification. The disordered stretch occupies residues 274 to 293 (PNLSTLDFGEEKSYSDGSEA). The segment at 377–396 (DPPAVPKPGDNLAEENSRDE) is disordered. The FFAT 2 motif lies at 450–454 (LSLDN). Residues 468–490 (PVLESSGEARSKRRTSLPAPGPN) form a disordered region.

The protein belongs to the OSBP family. In terms of assembly, homodimer. Interacts with RRAS. Interacts (phosphorylated form) with VAPA. Interacts with OSBPL6. In terms of processing, phosphorylation is enhanced in vitro by phorbol-12-myristate-13-acetate (PMA), forskolin and calcium ionophore A23187. Phosphorylation seems to be stimulated in conditions of low cell-cell (or cell-matrix) adhesion. As to expression, expressed in spinal ganglia. Expressed in a subset of small lymphocytes (at protein level).

Its subcellular location is the endoplasmic reticulum membrane. The protein localises to the cytoplasm. It localises to the cytosol. The protein resides in the cell membrane. It is found in the cell projection. Its subcellular location is the filopodium tip. The protein localises to the nucleus membrane. Its function is as follows. Phosphoinositide-binding protein which associates with both cell and endoplasmic reticulum (ER) membranes. Can bind to the ER membrane protein VAPA and recruit VAPA to plasma membrane sites, thus linking these intracellular compartments. The ORP3-VAPA complex stimulates RRAS signaling which in turn attenuates integrin beta-1 (ITGB1) activation at the cell surface. With VAPA, may regulate ER morphology. Has a role in regulation of the actin cytoskeleton, cell polarity and cell adhesion. Binds to phosphoinositides with preference for PI(3,4)P2 and PI(3,4,5)P3. Also binds 25-hydroxycholesterol and cholesterol. This Mus musculus (Mouse) protein is Oxysterol-binding protein-related protein 3 (Osbpl3).